The sequence spans 291 residues: m-AAA protease-interacting protein 1, mitochondrial (291 aa).

The N-terminal 96 residues, 1-96, are a transit peptide targeting the mitochondrion; the sequence is MALAARLLPL…SLPASPSRSY (96 aa).

Interacts with AFG3L2. Interacts with SPG7. Interacts with SMDT1/EMRE (via the N-terminal transit peptide); interaction is direct and takes place before maturation of SMDT1/EMRE.

The protein resides in the mitochondrion matrix. In terms of biological role, promotes sorting of SMDT1/EMRE in mitochondria by ensuring its maturation. Interacts with the transit peptide region of SMDT1/EMRE precursor protein in the mitochondrial matrix, leading to protect it against protein degradation by YME1L1, thereby ensuring SMDT1/EMRE maturation by the mitochondrial processing peptidase (PMPCA and PMPCB). This chain is m-AAA protease-interacting protein 1, mitochondrial, found in Mus musculus (Mouse).